The following is a 292-amino-acid chain: Formamidopyrimidine-DNA glycosylase (292 aa).

Catalysis depends on P2, which acts as the Schiff-base intermediate with DNA. E3 functions as the Proton donor in the catalytic mechanism. The Proton donor; for beta-elimination activity role is filled by K61. DNA contacts are provided by H103, R122, and K168. Residues 254 to 288 (DAYGREGEHCRRCGAVMRREKFMNRSSFYCPRCQP) form an FPG-type zinc finger. Catalysis depends on R278, which acts as the Proton donor; for delta-elimination activity.

Belongs to the FPG family. In terms of assembly, monomer. Zn(2+) is required as a cofactor.

The enzyme catalyses Hydrolysis of DNA containing ring-opened 7-methylguanine residues, releasing 2,6-diamino-4-hydroxy-5-(N-methyl)formamidopyrimidine.. It catalyses the reaction 2'-deoxyribonucleotide-(2'-deoxyribose 5'-phosphate)-2'-deoxyribonucleotide-DNA = a 3'-end 2'-deoxyribonucleotide-(2,3-dehydro-2,3-deoxyribose 5'-phosphate)-DNA + a 5'-end 5'-phospho-2'-deoxyribonucleoside-DNA + H(+). Functionally, involved in base excision repair of DNA damaged by oxidation or by mutagenic agents. Acts as a DNA glycosylase that recognizes and removes damaged bases. Has a preference for oxidized purines, such as 7,8-dihydro-8-oxoguanine (8-oxoG). Has AP (apurinic/apyrimidinic) lyase activity and introduces nicks in the DNA strand. Cleaves the DNA backbone by beta-delta elimination to generate a single-strand break at the site of the removed base with both 3'- and 5'-phosphates. In Mycobacterium ulcerans (strain Agy99), this protein is Formamidopyrimidine-DNA glycosylase.